The sequence spans 379 residues: Lipoyl synthase 1, mitochondrial (379 aa).

Residues C106, C111, C117, C137, C141, C144, and S352 each contribute to the [4Fe-4S] cluster site. A Radical SAM core domain is found at 122-341 (EHGTQTATIM…EERGNELGFL (220 aa)).

Belongs to the radical SAM superfamily. Lipoyl synthase family. [4Fe-4S] cluster serves as cofactor.

It localises to the mitochondrion. The catalysed reaction is [[Fe-S] cluster scaffold protein carrying a second [4Fe-4S](2+) cluster] + N(6)-octanoyl-L-lysyl-[protein] + 2 oxidized [2Fe-2S]-[ferredoxin] + 2 S-adenosyl-L-methionine + 4 H(+) = [[Fe-S] cluster scaffold protein] + N(6)-[(R)-dihydrolipoyl]-L-lysyl-[protein] + 4 Fe(3+) + 2 hydrogen sulfide + 2 5'-deoxyadenosine + 2 L-methionine + 2 reduced [2Fe-2S]-[ferredoxin]. Its pathway is protein modification; protein lipoylation via endogenous pathway; protein N(6)-(lipoyl)lysine from octanoyl-[acyl-carrier-protein]: step 2/2. In terms of biological role, catalyzes the radical-mediated insertion of two sulfur atoms into the C-6 and C-8 positions of the octanoyl moiety bound to the lipoyl domains of lipoate-dependent enzymes, thereby converting the octanoylated domains into lipoylated derivatives. The chain is Lipoyl synthase 1, mitochondrial from Drosophila yakuba (Fruit fly).